The sequence spans 864 residues: Microtubule-associated protein TORTIFOLIA1 (864 aa).

Positions 1-26 (MSTPTTSGSAAKPTRPARSSSLATRS) are disordered. Positions 17-26 (ARSSSLATRS) are enriched in polar residues. HEAT repeat units follow at residues 76-113 (ETLP…LHCD), 117-154 (AHLT…IYLK), 167-204 (LAVG…SAAS), 208-245 (TSFQ…VGAI), and 248-285 (QSLE…HSSG). The disordered stretch occupies residues 329–353 (DGASDDSKLSASEQLGSEKNGEKRS). The residue at position 414 (Ser-414) is a Phosphoserine. Residues 426–504 (NDEEESGLDD…QSEGSFTSNR (79 aa)) form a disordered region. A compositionally biased stretch (polar residues) spans 439–448 (MGSSNRLKNT). The span at 449–459 (QADDKQVKGRF) shows a compositional bias: basic and acidic residues. The span at 489–504 (VSNTDNQSEGSFTSNR) shows a compositional bias: polar residues. The stretch at 508–561 (SAIQRQLLQLERQQTNLMNMLQEFIGGSHDSMVTLEGRVRGLERIVEDMARDLS) forms a coiled coil. Positions 615 to 670 (DDWFIPPHAASRNGQAGPRRSPRSEQYENEHMGNGRRGWDNKASGTIRFGEGPSAR) are disordered. The span at 636-654 (PRSEQYENEHMGNGRRGWD) shows a compositional bias: basic and acidic residues.

Interacts with WAV3. In terms of tissue distribution, expressed in roots, hypocotyls, stems, flowers, siliques, inflorescences, petioles, cotyledons, and leaves. Particularly present in root tips and shoot meristems.

Its subcellular location is the cytoplasm. It localises to the cytoskeleton. Functionally, plant-specific microtubule-associated protein (MAP) that regulates the orientation of cortical microtubules and the direction of organ growth. Determines microtubule organization by modulating microtubule severing. The chain is Microtubule-associated protein TORTIFOLIA1 from Arabidopsis thaliana (Mouse-ear cress).